The following is a 433-amino-acid chain: Serine hydroxymethyltransferase (433 aa).

(6S)-5,6,7,8-tetrahydrofolate-binding positions include L127 and 131–133 (GHL). Position 236 is an N6-(pyridoxal phosphate)lysine (K236).

This sequence belongs to the SHMT family. Homodimer. It depends on pyridoxal 5'-phosphate as a cofactor.

It localises to the cytoplasm. The enzyme catalyses (6R)-5,10-methylene-5,6,7,8-tetrahydrofolate + glycine + H2O = (6S)-5,6,7,8-tetrahydrofolate + L-serine. It functions in the pathway one-carbon metabolism; tetrahydrofolate interconversion. The protein operates within amino-acid biosynthesis; glycine biosynthesis; glycine from L-serine: step 1/1. In terms of biological role, catalyzes the reversible interconversion of serine and glycine with tetrahydrofolate (THF) serving as the one-carbon carrier. This reaction serves as the major source of one-carbon groups required for the biosynthesis of purines, thymidylate, methionine, and other important biomolecules. Also exhibits THF-independent aldolase activity toward beta-hydroxyamino acids, producing glycine and aldehydes, via a retro-aldol mechanism. The protein is Serine hydroxymethyltransferase of Corynebacterium urealyticum (strain ATCC 43042 / DSM 7109).